Consider the following 377-residue polypeptide: MSEGLYEKFLAPDEPFPLLSQRGSVSEEGCLDVSDFGCQLSSCHRTDPRLHRFHSNRWNLTSCGTSVASSECSEELFSSVSVGDQDDCYSLLDDQDFTSFDLFPEGSVCSDVSSSISTYWDWSDSEFEWQLPGSDIASGSDVLSDIIPSIPNSPCLPSKKKNKHRNLDELPWSAMTNDEQVEYIEYLSRKVSTEMGLREQLDIIKIIDPTAQISPTDSEFIIELNCLTDEKLKQVRSYIKEHSPRQRCTRESWKRTSYSTASTSGVSGASVSSSSASMVSTASSTGSSGGNSASNSSANMSRTHSDNNLSASAAERIRDSKKRSKQRKLQQKALRKRQLKEQRQARKERISGLFLNEEVLSVKVNEEDHEGDVDVLM.

The segment covering Lys-240 to Lys-254 has biased composition (basic and acidic residues). Positions Lys-240 to Ile-350 are disordered. Residues Thr-256 to Ser-301 are compositionally biased toward low complexity. Positions Asp-319–Gln-338 are enriched in basic residues. A coiled-coil region spans residues Lys-321–Arg-349. Basic and acidic residues predominate over residues Leu-339 to Ile-350.

The protein belongs to the FAM199 family.

This is Protein FAM199X-B (fam199x-b) from Xenopus laevis (African clawed frog).